A 380-amino-acid chain; its full sequence is Cytochrome b (380 aa).

4 helical membrane-spanning segments follow: residues 34–54, 78–99, 114–134, and 179–199; these read FGSLLGICLTTQILTGLLLAM, WLIRNIHANGASFFFICIYLHI, WNTGILLLLTLMATAFVGYVL, and FFALHFLLPFMIAGLTLIHLT. Residues His-84 and His-98 each contribute to the heme b site. Heme b is bound by residues His-183 and His-197. Position 202 (His-202) interacts with a ubiquinone. Transmembrane regions (helical) follow at residues 227-247, 289-309, 321-341, and 348-368; these read LKDTLGFMLMLLPLTTLALFS, LGGVLALAASVLILFLSPLLH, LSQLLFWILIANLFILTWVGS, and FIIIGQLASLTYFTILLILLP.

It belongs to the cytochrome b family. As to quaternary structure, the cytochrome bc1 complex contains 11 subunits: 3 respiratory subunits (MT-CYB, CYC1 and UQCRFS1), 2 core proteins (UQCRC1 and UQCRC2) and 6 low-molecular weight proteins (UQCRH/QCR6, UQCRB/QCR7, UQCRQ/QCR8, UQCR10/QCR9, UQCR11/QCR10 and a cleavage product of UQCRFS1). This cytochrome bc1 complex then forms a dimer. The cofactor is heme b.

It localises to the mitochondrion inner membrane. Its function is as follows. Component of the ubiquinol-cytochrome c reductase complex (complex III or cytochrome b-c1 complex) that is part of the mitochondrial respiratory chain. The b-c1 complex mediates electron transfer from ubiquinol to cytochrome c. Contributes to the generation of a proton gradient across the mitochondrial membrane that is then used for ATP synthesis. The protein is Cytochrome b (MT-CYB) of Fregetta tropica (Black-bellied storm-petrel).